Consider the following 392-residue polypeptide: uncharacterized protein (392 aa).

A signal peptide spans 1–19; it reads MRRIVCPPVLFLSASLLTG. Cys20 carries N-palmitoyl cysteine lipidation. Cys20 carries S-diacylglycerol cysteine lipidation. The tract at residues 148 to 173 is disordered; it reads SSGSSGGGGGGSGSSSDGGIKNGSDE. Residues 151–160 show a composition bias toward gly residues; that stretch reads SSGGGGGGSG.

It belongs to the TP013X lipoprotein family.

The protein resides in the cell membrane. This is an uncharacterized protein from Treponema pallidum (strain Nichols).